A 502-amino-acid chain; its full sequence is Aspartyl/glutamyl-tRNA(Asn/Gln) amidotransferase subunit B (502 aa).

Positions 272–293 are disordered; it reads TRHWHEDTRSTTSGRPKSDADD.

Belongs to the GatB/GatE family. GatB subfamily. As to quaternary structure, heterotrimer of A, B and C subunits.

The catalysed reaction is L-glutamyl-tRNA(Gln) + L-glutamine + ATP + H2O = L-glutaminyl-tRNA(Gln) + L-glutamate + ADP + phosphate + H(+). It carries out the reaction L-aspartyl-tRNA(Asn) + L-glutamine + ATP + H2O = L-asparaginyl-tRNA(Asn) + L-glutamate + ADP + phosphate + 2 H(+). Its function is as follows. Allows the formation of correctly charged Asn-tRNA(Asn) or Gln-tRNA(Gln) through the transamidation of misacylated Asp-tRNA(Asn) or Glu-tRNA(Gln) in organisms which lack either or both of asparaginyl-tRNA or glutaminyl-tRNA synthetases. The reaction takes place in the presence of glutamine and ATP through an activated phospho-Asp-tRNA(Asn) or phospho-Glu-tRNA(Gln). The chain is Aspartyl/glutamyl-tRNA(Asn/Gln) amidotransferase subunit B from Paenarthrobacter aurescens (strain TC1).